A 209-amino-acid polypeptide reads, in one-letter code: GTP-binding nuclear protein Ran1A (209 aa).

The region spanning 1–162 is the Small GTPase Ran-type domain; sequence NFKLVIVGDG…LYLARKLAGD (162 aa). 9 to 16 provides a ligand contact to GTP; that stretch reads DGGTGKTT. Residues 28 to 36 form a switch-I region; it reads KKYEPTIGV. GTP is bound by residues glycine 59, 113–116, and 141–143; these read NKVD and SAK. Residues 59–75 are switch-II; that stretch reads GQEKFGGLRDGYYIHGQ. A compositionally biased stretch (low complexity) spans 187-196; the sequence is QHEAELAQAA. A disordered region spans residues 187–209; sequence QHEAELAQAASQPLPDDDDDAFD.

Belongs to the small GTPase superfamily. Ran family. In terms of assembly, found in a nuclear export complex with RanGTP, exportin and pre-miRNA.

The protein localises to the nucleus. GTP-binding protein involved in nucleocytoplasmic transport. Required for the import of protein into the nucleus and also for RNA export. Involved in chromatin condensation and control of cell cycle. The protein is GTP-binding nuclear protein Ran1A (RAN1A) of Lotus japonicus (Lotus corniculatus var. japonicus).